The following is a 562-amino-acid chain: Putative transport protein YPA_0617 (562 aa).

The next 6 helical transmembrane spans lie at 8–28 (LLNGNYILLLFVVLALGLCLG), 37–57 (LGNAIGVLVVSLLLGQQHFAI), 66–86 (FMLFIFCVGVEAGPNFFSIFF), 94–114 (MLALVMVGSAMILALGLGKLF), 118–138 (IGLTAGMLAGSMTSTPVLVGA), and 158–178 (NLSLGYALTYLIGLVSLILGA). 2 RCK C-terminal domains span residues 202–288 (LDTD…SFRN) and 290–373 (KEVF…KIGF). 5 consecutive transmembrane segments (helical) span residues 383–403 (LLAFCSFFILGLMIGLITFQF), 406–426 (FSFGIGNAAGLLLAGIMLGFL), 447–467 (FGLMVFMAGVGLSAGGGINSS), 475–495 (MLISGLIVSLVPVVICFVFGA), and 541–561 (IANVLLTLAGSLIVILWPGIL).

The protein belongs to the AAE transporter (TC 2.A.81) family. YbjL subfamily.

The protein resides in the cell membrane. The polypeptide is Putative transport protein YPA_0617 (Yersinia pestis bv. Antiqua (strain Antiqua)).